The primary structure comprises 498 residues: WD repeat-containing protein 55 homolog (498 aa).

The disordered stretch occupies residues 1 to 131 (MHTHNNFKTP…ATFDLDEDDE (131 aa)). Composition is skewed to acidic residues over residues 12–23 (DEDELDDLDEDM) and 31–48 (IEQE…EYDL). WD repeat units lie at residues 154–193 (KLED…NKLL), 198–237 (VHSK…LKKL), 241–279 (AHDD…AIFE), 282–321 (ELED…MYVQ), 324–363 (PYEE…YHCD), and 408–447 (QHNM…DFGE).

This sequence belongs to the WD repeat WDR55 family.

This Drosophila simulans (Fruit fly) protein is WD repeat-containing protein 55 homolog.